Consider the following 517-residue polypeptide: Putative succinate-semialdehyde dehydrogenase [NADP(+)] (517 aa).

Residues 157–158 (WN), 181–184 (KPDS), and 232–233 (GS) each bind NADP(+). Glu-254 functions as the Proton acceptor in the catalytic mechanism. Leu-255 is a binding site for NADP(+). Residue Cys-288 is the Nucleophile of the active site. Residue Glu-386 participates in NADP(+) binding.

It belongs to the aldehyde dehydrogenase family.

It catalyses the reaction succinate semialdehyde + NADP(+) + H2O = succinate + NADPH + 2 H(+). Its function is as follows. Catalyzes the NADP(+)-dependent oxidation of succinate semialdehyde to succinate. Although it has succinate semialdehyde dehydrogenase activity, is likely to act physiologically on a different aldehyde(s). The polypeptide is Putative succinate-semialdehyde dehydrogenase [NADP(+)] (gabD2) (Mycolicibacterium smegmatis (strain ATCC 700084 / mc(2)155) (Mycobacterium smegmatis)).